The chain runs to 148 residues: Transcription antitermination protein NusB (148 aa).

Belongs to the NusB family.

Involved in transcription antitermination. Required for transcription of ribosomal RNA (rRNA) genes. Binds specifically to the boxA antiterminator sequence of the ribosomal RNA (rrn) operons. This Saccharopolyspora erythraea (strain ATCC 11635 / DSM 40517 / JCM 4748 / NBRC 13426 / NCIMB 8594 / NRRL 2338) protein is Transcription antitermination protein NusB.